The primary structure comprises 135 residues: Small ribosomal subunit protein eS6 (135 aa).

Belongs to the eukaryotic ribosomal protein eS6 family.

The polypeptide is Small ribosomal subunit protein eS6 (Methanococcoides burtonii (strain DSM 6242 / NBRC 107633 / OCM 468 / ACE-M)).